We begin with the raw amino-acid sequence, 108 residues long: Glutaredoxin 4 (108 aa).

Positions 5-107 (IKKIQNQIQN…KTISICDKLN (103 aa)) constitute a Glutaredoxin domain. Lys22 contributes to the glutathione binding site. Cys30 contributes to the [2Fe-2S] cluster binding site. Glutathione contacts are provided by residues Arg59, Phe71, and 84–85 (CN).

This sequence belongs to the glutaredoxin family. Monothiol subfamily. As to quaternary structure, homodimer.

Its subcellular location is the cytoplasm. Its function is as follows. Monothiol glutaredoxin involved in the biogenesis of iron-sulfur clusters. This chain is Glutaredoxin 4 (grxD), found in Buchnera aphidicola subsp. Baizongia pistaciae (strain Bp).